Here is a 343-residue protein sequence, read N- to C-terminus: L-threonine 3-dehydrogenase (343 aa).

Cysteine 40 contributes to the Zn(2+) binding site. Residues threonine 42 and histidine 45 each act as charge relay system in the active site. Zn(2+) is bound by residues histidine 65, glutamate 66, cysteine 95, cysteine 98, cysteine 101, and cysteine 109. Residues isoleucine 177, aspartate 197, arginine 202, 264-266 (LGI), and 288-289 (IY) contribute to the NAD(+) site.

The protein belongs to the zinc-containing alcohol dehydrogenase family. Homotetramer. Zn(2+) is required as a cofactor.

It localises to the cytoplasm. It catalyses the reaction L-threonine + NAD(+) = (2S)-2-amino-3-oxobutanoate + NADH + H(+). The protein operates within amino-acid degradation; L-threonine degradation via oxydo-reductase pathway; glycine from L-threonine: step 1/2. Catalyzes the NAD(+)-dependent oxidation of L-threonine to 2-amino-3-ketobutyrate. This is L-threonine 3-dehydrogenase from Vibrio atlanticus (strain LGP32) (Vibrio splendidus (strain Mel32)).